Here is a 252-residue protein sequence, read N- to C-terminus: Imidazole glycerol phosphate synthase subunit HisF (252 aa).

Residues D11 and D130 contribute to the active site.

It belongs to the HisA/HisF family. As to quaternary structure, heterodimer of HisH and HisF.

It is found in the cytoplasm. The enzyme catalyses 5-[(5-phospho-1-deoxy-D-ribulos-1-ylimino)methylamino]-1-(5-phospho-beta-D-ribosyl)imidazole-4-carboxamide + L-glutamine = D-erythro-1-(imidazol-4-yl)glycerol 3-phosphate + 5-amino-1-(5-phospho-beta-D-ribosyl)imidazole-4-carboxamide + L-glutamate + H(+). It participates in amino-acid biosynthesis; L-histidine biosynthesis; L-histidine from 5-phospho-alpha-D-ribose 1-diphosphate: step 5/9. Its function is as follows. IGPS catalyzes the conversion of PRFAR and glutamine to IGP, AICAR and glutamate. The HisF subunit catalyzes the cyclization activity that produces IGP and AICAR from PRFAR using the ammonia provided by the HisH subunit. This is Imidazole glycerol phosphate synthase subunit HisF from Moorella thermoacetica (strain ATCC 39073 / JCM 9320).